We begin with the raw amino-acid sequence, 282 residues long: UPF0294 protein VIBHAR_03217 (282 aa).

Belongs to the UPF0294 family.

It is found in the cytoplasm. The sequence is that of UPF0294 protein VIBHAR_03217 from Vibrio campbellii (strain ATCC BAA-1116).